A 181-amino-acid polypeptide reads, in one-letter code: Cyclic AMP-dependent transcription factor ATF-3 (181 aa).

A disordered region spans residues 73–97 (EMSVTKSEAAPEEDERKRRRRERNK). Lys-78 participates in a covalent cross-link: Glycyl lysine isopeptide (Lys-Gly) (interchain with G-Cter in SUMO2). In terms of domain architecture, bZIP spans 86–149 (DERKRRRRER…QHLIYMLNLH (64 aa)). The segment at 88-110 (RKRRRRERNKIAAAKCRNKKKEK) is basic motif. The interval 114–142 (LQKESEKLESVNAELKAQIEELKNEKQHL) is leucine-zipper. Residue Thr-162 is modified to Phosphothreonine. A Glycyl lysine isopeptide (Lys-Gly) (interchain with G-Cter in SUMO2) cross-link involves residue Lys-175.

The protein belongs to the bZIP family. ATF subfamily. In terms of assembly, binds DNA as a homodimer or a heterodimer. Interacts with KAT5; promoting KAT5 autoacetylation and KAT5 deubiquitination by USP7.

The protein resides in the nucleus. In terms of biological role, this protein binds the cAMP response element (CRE) (consensus: 5'-GTGACGT[AC][AG]-3'), a sequence present in many viral and cellular promoters. Represses transcription from promoters with ATF sites. It may repress transcription by stabilizing the binding of inhibitory cofactors at the promoter. The chain is Cyclic AMP-dependent transcription factor ATF-3 from Mus musculus (Mouse).